We begin with the raw amino-acid sequence, 963 residues long: Protein NLP2 (963 aa).

Positions 635-716 (RRPGEKRRTK…IDSVQGVQGS (82 aa)) constitute an RWP-RK domain. Residues 734–755 (MSGTGTSFKNPNAQTENGVSAQ) show a composition bias toward polar residues. The tract at residues 734–794 (MSGTGTSFKN…QSTNTGTTSN (61 aa)) is disordered. The span at 756–794 (GTAAAPKSPPSSSCSHSSGSSTCCSTGANQSTNTGTTSN) shows a compositional bias: low complexity. The PB1 domain occupies 862–945 (ASKVKATFGE…RTIKISVHEA (84 aa)).

It is found in the nucleus. Functionally, probable transcription factor. The chain is Protein NLP2 (NLP2) from Arabidopsis thaliana (Mouse-ear cress).